The chain runs to 602 residues: Aspartate--tRNA(Asp/Asn) ligase (602 aa).

E175 contacts L-aspartate. Residues 199–202 are aspartate; it reads QIFK. An L-aspartate-binding site is contributed by R221. Residues 221–223 and Q230 contribute to the ATP site; that span reads RDE. H458 is a binding site for L-aspartate. An ATP-binding site is contributed by E492. L-aspartate is bound at residue R499. 544–547 serves as a coordination point for ATP; sequence GLDR.

Belongs to the class-II aminoacyl-tRNA synthetase family. Type 1 subfamily. Homodimer.

The protein resides in the cytoplasm. The enzyme catalyses tRNA(Asx) + L-aspartate + ATP = L-aspartyl-tRNA(Asx) + AMP + diphosphate. Its function is as follows. Aspartyl-tRNA synthetase with relaxed tRNA specificity since it is able to aspartylate not only its cognate tRNA(Asp) but also tRNA(Asn). Reaction proceeds in two steps: L-aspartate is first activated by ATP to form Asp-AMP and then transferred to the acceptor end of tRNA(Asp/Asn). The polypeptide is Aspartate--tRNA(Asp/Asn) ligase (Cupriavidus necator (strain ATCC 17699 / DSM 428 / KCTC 22496 / NCIMB 10442 / H16 / Stanier 337) (Ralstonia eutropha)).